Reading from the N-terminus, the 232-residue chain is Large ribosomal subunit protein uL1 (232 aa).

This sequence belongs to the universal ribosomal protein uL1 family. In terms of assembly, part of the 50S ribosomal subunit.

Functionally, binds directly to 23S rRNA. The L1 stalk is quite mobile in the ribosome, and is involved in E site tRNA release. Protein L1 is also a translational repressor protein, it controls the translation of the L11 operon by binding to its mRNA. In Maricaulis maris (strain MCS10) (Caulobacter maris), this protein is Large ribosomal subunit protein uL1.